The primary structure comprises 1038 residues: Probable LRR receptor-like serine/threonine-protein kinase At1g53430 (1038 aa).

A signal peptide spans 1-28 (MGFIFSTEKVVYVLLLIFVCLENFGSNA). Residues 29-609 (QLLPEDEVQT…VDTGKPLSNG (581 aa)) are Extracellular-facing. Residues N48, N77, N85, N112, and N127 are each glycosylated (N-linked (GlcNAc...) asparagine). 6 LRR repeats span residues 113-137 (LTRL…LSQI), 139-160 (LEIL…LGDI), 161-184 (TTLT…LGNL), 185-208 (RSLK…LSNL), 210-234 (NLTE…NWTL), and 236-256 (ERLD…ISNL). N196, N210, N231, N255, and N258 each carry an N-linked (GlcNAc...) asparagine glycan. LRR repeat units lie at residues 259-281 (LTEL…LRNL), 282-305 (MKMK…IGSM), 306-328 (SELK…TFRN), 330-351 (DAFN…QFII), and 352-374 (NSKE…SCNQ). N-linked (GlcNAc...) asparagine glycans are attached at residues N339, N363, N471, and N561. A helical membrane pass occupies residues 610–630 (AVAGIVIAACAVFGLLVLVIL). At 631–1038 (RLTGYLGGKE…LDDLTDVKIE (408 aa)) the chain is on the cytoplasmic side. T658 bears the Phosphothreonine mark. The 282-residue stretch at 669–950 (FDPENKIGEG…EGKIKVQPPL (282 aa)) folds into the Protein kinase domain. ATP contacts are provided by residues 675–683 (IGEGGFGPV) and K697. Y742 bears the Phosphotyrosine mark. D795 (proton acceptor) is an active-site residue. S828 carries the phosphoserine modification. Phosphothreonine occurs at positions 829 and 834. Phosphotyrosine is present on Y842. The segment at 984–1038 (RNREQDISSSSMDGPWVDSSFSEPGKDVSLQQQEEGRSSSSSRKLLDDLTDVKIE) is disordered. The span at 1027–1038 (KLLDDLTDVKIE) shows a compositional bias: basic and acidic residues.

It belongs to the protein kinase superfamily. Ser/Thr protein kinase family.

The protein localises to the membrane. It carries out the reaction L-seryl-[protein] + ATP = O-phospho-L-seryl-[protein] + ADP + H(+). The catalysed reaction is L-threonyl-[protein] + ATP = O-phospho-L-threonyl-[protein] + ADP + H(+). This is Probable LRR receptor-like serine/threonine-protein kinase At1g53430 from Arabidopsis thaliana (Mouse-ear cress).